Here is a 709-residue protein sequence, read N- to C-terminus: Molybdenum cofactor sulfurase (709 aa).

Lys208 carries the post-translational modification N6-(pyridoxal phosphate)lysine. The active site involves Cys367. The 145-residue stretch at 563–707 (DNALDRQNCR…LESGMSVNFS (145 aa)) folds into the MOSC domain.

The protein belongs to the class-V pyridoxal-phosphate-dependent aminotransferase family. MOCOS subfamily. Requires pyridoxal 5'-phosphate as cofactor.

The enzyme catalyses Mo-molybdopterin + L-cysteine + AH2 = thio-Mo-molybdopterin + L-alanine + A + H2O. It participates in cofactor biosynthesis; molybdopterin biosynthesis. Sulfurates the molybdenum cofactor. Sulfation of molybdenum is essential for xanthine dehydrogenase (XDH) and aldehyde oxidase (ADO) enzymes in which molybdenum cofactor is liganded by 1 oxygen and 1 sulfur atom in active form. This Caenorhabditis elegans protein is Molybdenum cofactor sulfurase.